Here is a 120-residue protein sequence, read N- to C-terminus: Large ribosomal subunit protein bL20 (120 aa).

It belongs to the bacterial ribosomal protein bL20 family.

Functionally, binds directly to 23S ribosomal RNA and is necessary for the in vitro assembly process of the 50S ribosomal subunit. It is not involved in the protein synthesizing functions of that subunit. This is Large ribosomal subunit protein bL20 from Ureaplasma parvum serovar 3 (strain ATCC 27815 / 27 / NCTC 11736).